Here is a 217-residue protein sequence, read N- to C-terminus: 3,4-dihydroxy-2-butanone 4-phosphate synthase (217 aa).

D-ribulose 5-phosphate is bound by residues 37 to 38, D42, 150 to 154, and E174; these read RE and RGGHT. E38 lines the Mg(2+) pocket. Mg(2+) is bound at residue H153.

It belongs to the DHBP synthase family. In terms of assembly, homodimer. Mg(2+) serves as cofactor. The cofactor is Mn(2+).

The catalysed reaction is D-ribulose 5-phosphate = (2S)-2-hydroxy-3-oxobutyl phosphate + formate + H(+). It functions in the pathway cofactor biosynthesis; riboflavin biosynthesis; 2-hydroxy-3-oxobutyl phosphate from D-ribulose 5-phosphate: step 1/1. In terms of biological role, catalyzes the conversion of D-ribulose 5-phosphate to formate and 3,4-dihydroxy-2-butanone 4-phosphate. The polypeptide is 3,4-dihydroxy-2-butanone 4-phosphate synthase (Klebsiella pneumoniae subsp. pneumoniae (strain ATCC 700721 / MGH 78578)).